The primary structure comprises 1736 residues: Hybrid signal transduction histidine kinase I (1736 aa).

Residues 143–161 show a composition bias toward low complexity; the sequence is HNINNNQNNQNSVNINSSN. Residues 143–171 form a disordered region; the sequence is HNINNNQNNQNSVNINSSNKGQYNRPEPS. The PAC domain maps to 234–286; sequence FEYPLRINRKNDNLVRYIQLKGEIIKKDDKVFKVLGVCHDFSEIQEAKDKLEE. The 72-residue stretch at 287 to 358 folds into the PAS domain; sequence ESKFVEALIG…QINLEKSGTP (72 aa). The interval 378–469 is disordered; sequence TSNQQQSSLS…NTTNGIGGAT (92 aa). Residues 379 to 389 show a composition bias toward low complexity; the sequence is SNQQQSSLSKS. Polar residues predominate over residues 392–412; it reads PRSQSNCSNGNKSQNRLSKNY. Residues 413–469 are compositionally biased toward low complexity; the sequence is STTTTTTNNNNNNNNNNNNNNNNNNNNNSISQQQQTQVSTQQTQQQQNTTNGIGGAT. In terms of domain architecture, Histidine kinase spans 556-908; it reads NISHELLSPM…TFHFILSIKS (353 aa). His-559 bears the Phosphohistidine; by autocatalysis mark. Disordered regions lie at residues 711 to 821, 952 to 971, 1080 to 1124, 1157 to 1258, 1277 to 1301, 1330 to 1393, and 1419 to 1520; these read NSKT…KREK, TKKVKKDSNDNGNNDSTNYG, NGNN…KQHS, PPKS…ILSP, SLTPNSSNSTSTNVTQSSSNIINNG, ASSP…NLSS, and SNNL…PPIL. Acidic residues-rich tracts occupy residues 725-735 and 758-789; these read SIDGDYDDQDN and ELDEKDNSDDDDENDDENDETDENDDDTDDDT. 3 stretches are compositionally biased toward low complexity: residues 790 to 807, 961 to 971, and 1080 to 1096; these read SSNTSRNNISNNLLFHNN, DNGNNDSTNYG, and NGNNNSGISLNNSNNNI. A compositionally biased stretch (polar residues) spans 1097–1117; that stretch reads QTPNGLNNSRGSSLISTPSTK. Low complexity-rich tracts occupy residues 1186–1195 and 1202–1258; these read SSPPINSSSS and TNGS…ILSP. The span at 1330-1339 shows a compositional bias: polar residues; sequence ASSPKQSQRG. Low complexity-rich tracts occupy residues 1340-1376, 1425-1475, 1482-1492, and 1506-1520; these read YSPKQQYSPKQYSPKQQYSPKQYSPKQQQQQQQQQQQ, NNNN…STPE, SPRSNNNNNCS, and SSTITTPQFQSPPIL. The Response regulatory domain occupies 1551 to 1674; sequence KVLVAEDNTM…LLYEVINTQI (124 aa). Residue Asp-1605 is modified to 4-aspartylphosphate. Over residues 1695 to 1722 the composition is skewed to low complexity; the sequence is NNNNNNTNNNNNNNNSSNPVNNNNSNSI. The interval 1695–1736 is disordered; the sequence is NNNNNNTNNNNNNNNSSNPVNNNNSNSIDATQQELNNEKIRI.

Activation probably requires transfer of a phosphate group between a histidine in the kinase core (transmitter) domain and an aspartate of the receiver domain.

It catalyses the reaction ATP + protein L-histidine = ADP + protein N-phospho-L-histidine.. In terms of biological role, acts as a receptor histidine kinase for a signal transduction pathway. This protein undergoes an ATP-dependent autophosphorylation at a conserved histidine residue in the kinase core, and a phosphoryl group is then transferred to a conserved aspartate residue in the receiver domain. The polypeptide is Hybrid signal transduction histidine kinase I (dhkI-1) (Dictyostelium discoideum (Social amoeba)).